The sequence spans 248 residues: Type III pantothenate kinase (248 aa).

Asp8–Lys15 lines the ATP pocket. Substrate-binding positions include Tyr87 and Gly94–Arg97. Asp96 (proton acceptor) is an active-site residue. Position 119 (Thr119) interacts with ATP. Thr173 contributes to the substrate binding site.

It belongs to the type III pantothenate kinase family. Homodimer. It depends on NH4(+) as a cofactor. K(+) serves as cofactor.

The protein resides in the cytoplasm. The enzyme catalyses (R)-pantothenate + ATP = (R)-4'-phosphopantothenate + ADP + H(+). It functions in the pathway cofactor biosynthesis; coenzyme A biosynthesis; CoA from (R)-pantothenate: step 1/5. Its function is as follows. Catalyzes the phosphorylation of pantothenate (Pan), the first step in CoA biosynthesis. The sequence is that of Type III pantothenate kinase from Methylobacillus flagellatus (strain ATCC 51484 / DSM 6875 / VKM B-1610 / KT).